The following is an 870-amino-acid chain: Protein RRP6-like 2 (870 aa).

The region spanning 263-428 (VQEVKDLKEL…YIYDLIKLEL (166 aa)) is the 3'-5' exonuclease domain. Positions 479–559 (NAAQLAIVAG…RQSMQHYAAF (81 aa)) constitute an HRDC domain. Disordered stretches follow at residues 583–605 (SEKK…SSQL), 649–668 (GALL…EKVK), 688–775 (TEKV…EDEP), and 821–870 (FGEG…SFKN). Basic and acidic residues-rich tracts occupy residues 720 to 729 (SKEDGVKELK) and 821 to 834 (FGEG…KREA). The segment covering 840 to 849 (KGSTQEQSEF) has biased composition (polar residues).

Its subcellular location is the nucleus. The protein localises to the nucleolus. It localises to the cytoplasm. Its function is as follows. Acts as an important epigenetic regulator through multiple silencing mechanisms. Involved in association with RRP6L1 in the silencing of the solo LTR locus. Controls levels of non-coding RNAs (ncRNAs) from the solo LTR locus. Seems to function independently of the RNA-mediated gene silencing (RdDM) pathway. Functions redundantly with RRP6L1 in the regulation of FLC locus. Participates in the maintenance of trimethylated 'Lys-27' (H3K27me3) at FLC locus via the regulation of antisense long non-coding RNAs (lncRNAs) and the regulation of diverse antisense RNAs derived from the FLC locus. Seems not involved in the exosomal RNA degradation. May be involved in poly(A)-mediated RNA degradation. In Arabidopsis thaliana (Mouse-ear cress), this protein is Protein RRP6-like 2.